Consider the following 98-residue polypeptide: NADH-ubiquinone oxidoreductase chain 4L (98 aa).

3 helical membrane passes run 1–21, 29–49, and 61–81; these read MSMV…GLLV, SLLC…MAIL, and IILL…LVMV.

This sequence belongs to the complex I subunit 4L family. As to quaternary structure, core subunit of respiratory chain NADH dehydrogenase (Complex I) which is composed of 45 different subunits.

The protein resides in the mitochondrion inner membrane. It catalyses the reaction a ubiquinone + NADH + 5 H(+)(in) = a ubiquinol + NAD(+) + 4 H(+)(out). Core subunit of the mitochondrial membrane respiratory chain NADH dehydrogenase (Complex I) which catalyzes electron transfer from NADH through the respiratory chain, using ubiquinone as an electron acceptor. Part of the enzyme membrane arm which is embedded in the lipid bilayer and involved in proton translocation. The sequence is that of NADH-ubiquinone oxidoreductase chain 4L (MT-ND4L) from Lynx canadensis (Canada lynx).